Consider the following 268-residue polypeptide: Photosystem II 22 kDa protein 1, chloroplastic (268 aa).

The transit peptide at 1-60 (MAQSMLVSGANGTVAAASTSRLQPVRPTPFSRLVLSQPSSSLGRAVSVKTVALFGRSKTK) directs the protein to the chloroplast. A run of 2 repeats spans residues 54 to 161 (FGRS…FVDD) and 164 to 268 (VTGL…DDEE). A run of 4 helical transmembrane segments spans residues 99 to 119 (VAMLGFAASILGEAITGKGIL), 133 to 153 (AEPLLLFFILFTLLGAIGALG), 199 to 219 (LFVGRLAQLGIAFSIIGEIIT), and 234 to 254 (PINEIEPLVLFNVVFFFIAAI).

The protein belongs to the ELIP/psbS family. In terms of tissue distribution, expressed at low levels in leaves (at protein level).

Its subcellular location is the plastid. It is found in the chloroplast thylakoid membrane. In terms of biological role, involved in high light-mediated energy-dependent nonphotochemical quenching (NPQ, qE) and thermal dissipation (TD) thus regulating energy conversion in photosystem II and protecting from photoinhibition. Also seems to regulate quantum yield of electron transport in fluctuating light conditions. In Oryza sativa subsp. indica (Rice), this protein is Photosystem II 22 kDa protein 1, chloroplastic.